Reading from the N-terminus, the 302-residue chain is Probable alpha-L-glutamate ligase (302 aa).

The 183-residue stretch at Leu-112–Glu-294 folds into the ATP-grasp domain. ATP is bound by residues Lys-148, Asp-185–Phe-186, Asp-194, and Arg-218–Asn-220. 3 residues coordinate Mg(2+): Asp-255, Glu-267, and Asn-269. Mn(2+)-binding residues include Asp-255, Glu-267, and Asn-269.

The protein belongs to the RimK family. Requires Mg(2+) as cofactor. The cofactor is Mn(2+).

The protein is Probable alpha-L-glutamate ligase of Haemophilus influenzae (strain 86-028NP).